The primary structure comprises 238 residues: Orotidine 5'-phosphate decarboxylase (238 aa).

Residues Asp10, Lys32, 59–68, Thr122, Arg184, Gln193, Gly213, and Arg214 contribute to the substrate site; that span reads DLKLHDIPNT. The Proton donor role is filled by Lys61.

The protein belongs to the OMP decarboxylase family. Type 1 subfamily. As to quaternary structure, homodimer.

The enzyme catalyses orotidine 5'-phosphate + H(+) = UMP + CO2. Its pathway is pyrimidine metabolism; UMP biosynthesis via de novo pathway; UMP from orotate: step 2/2. Catalyzes the decarboxylation of orotidine 5'-monophosphate (OMP) to uridine 5'-monophosphate (UMP). The protein is Orotidine 5'-phosphate decarboxylase of Bacillus cereus (strain B4264).